We begin with the raw amino-acid sequence, 618 residues long: Membrane protein insertase YidC (618 aa).

Transmembrane regions (helical) follow at residues 3 to 23 (KNTITGLVLIGILLVGFSFLS), 363 to 383 (WGLSMGIVLLLLTIMVKIVVF), 439 to 459 (LPMLLQFPILMALFMFVPSAI), 478 to 498 (FITFPFHIPFLGNHLSLFCLL), 520 to 540 (PQMAAMKWMMYLMPIMFLFVL), and 545 to 565 (SGLNYYYFISTLISVVTMIIL).

The protein belongs to the OXA1/ALB3/YidC family. Type 1 subfamily. As to quaternary structure, interacts with the Sec translocase complex via SecD. Specifically interacts with transmembrane segments of nascent integral membrane proteins during membrane integration.

Its subcellular location is the cell inner membrane. In terms of biological role, required for the insertion and/or proper folding and/or complex formation of integral membrane proteins into the membrane. Involved in integration of membrane proteins that insert both dependently and independently of the Sec translocase complex, as well as at least some lipoproteins. Aids folding of multispanning membrane proteins. This is Membrane protein insertase YidC from Bacteroides fragilis (strain ATCC 25285 / DSM 2151 / CCUG 4856 / JCM 11019 / LMG 10263 / NCTC 9343 / Onslow / VPI 2553 / EN-2).